Here is a 403-residue protein sequence, read N- to C-terminus: Aminomethyltransferase, mitochondrial (403 aa).

The N-terminal 28 residues, 1–28 (MHRIVSVVAPLGFRLQAQPLVQSRPLSS), are a transit peptide targeting the mitochondrion. Substrate-binding residues include E232 and R261. An N6-succinyllysine modification is found at K368. Residue Y399 coordinates substrate.

This sequence belongs to the GcvT family. In terms of assembly, the glycine cleavage system is composed of four proteins: P, T, L and H.

The protein resides in the mitochondrion. The catalysed reaction is N(6)-[(R)-S(8)-aminomethyldihydrolipoyl]-L-lysyl-[protein] + (6S)-5,6,7,8-tetrahydrofolate = N(6)-[(R)-dihydrolipoyl]-L-lysyl-[protein] + (6R)-5,10-methylene-5,6,7,8-tetrahydrofolate + NH4(+). Functionally, the glycine cleavage system catalyzes the degradation of glycine. The protein is Aminomethyltransferase, mitochondrial of Mus musculus (Mouse).